Consider the following 212-residue polypeptide: Orotate phosphoribosyltransferase (212 aa).

Lys-26 serves as a coordination point for 5-phospho-alpha-D-ribose 1-diphosphate. 34-35 contributes to the orotate binding site; it reads FF. 5-phospho-alpha-D-ribose 1-diphosphate is bound by residues 72-73, Arg-98, Lys-99, Lys-102, His-104, and 123-131; these read YK and DDVISAGTS. Ser-127 and Arg-155 together coordinate orotate.

It belongs to the purine/pyrimidine phosphoribosyltransferase family. PyrE subfamily. As to quaternary structure, homodimer. Mg(2+) is required as a cofactor.

It catalyses the reaction orotidine 5'-phosphate + diphosphate = orotate + 5-phospho-alpha-D-ribose 1-diphosphate. The protein operates within pyrimidine metabolism; UMP biosynthesis via de novo pathway; UMP from orotate: step 1/2. Functionally, catalyzes the transfer of a ribosyl phosphate group from 5-phosphoribose 1-diphosphate to orotate, leading to the formation of orotidine monophosphate (OMP). In Thiobacillus denitrificans (strain ATCC 25259 / T1), this protein is Orotate phosphoribosyltransferase.